Here is a 289-residue protein sequence, read N- to C-terminus: 4-diphosphocytidyl-2-C-methyl-D-erythritol kinase (289 aa).

Residue lysine 11 is part of the active site. 95–105 contributes to the ATP binding site; it reads PMGGGIGGGSS. Aspartate 137 is an active-site residue.

The protein belongs to the GHMP kinase family. IspE subfamily.

It catalyses the reaction 4-CDP-2-C-methyl-D-erythritol + ATP = 4-CDP-2-C-methyl-D-erythritol 2-phosphate + ADP + H(+). It participates in isoprenoid biosynthesis; isopentenyl diphosphate biosynthesis via DXP pathway; isopentenyl diphosphate from 1-deoxy-D-xylulose 5-phosphate: step 3/6. Catalyzes the phosphorylation of the position 2 hydroxy group of 4-diphosphocytidyl-2C-methyl-D-erythritol. The chain is 4-diphosphocytidyl-2-C-methyl-D-erythritol kinase from Aeromonas hydrophila subsp. hydrophila (strain ATCC 7966 / DSM 30187 / BCRC 13018 / CCUG 14551 / JCM 1027 / KCTC 2358 / NCIMB 9240 / NCTC 8049).